Consider the following 210-residue polypeptide: UPF0301 protein OCAR_7326/OCA5_c07920 (210 aa).

The protein belongs to the UPF0301 (AlgH) family.

This is UPF0301 protein OCAR_7326/OCA5_c07920 from Afipia carboxidovorans (strain ATCC 49405 / DSM 1227 / KCTC 32145 / OM5) (Oligotropha carboxidovorans).